A 342-amino-acid chain; its full sequence is S-adenosylmethionine:tRNA ribosyltransferase-isomerase (342 aa).

It belongs to the QueA family. In terms of assembly, monomer.

Its subcellular location is the cytoplasm. The catalysed reaction is 7-aminomethyl-7-carbaguanosine(34) in tRNA + S-adenosyl-L-methionine = epoxyqueuosine(34) in tRNA + adenine + L-methionine + 2 H(+). It functions in the pathway tRNA modification; tRNA-queuosine biosynthesis. Functionally, transfers and isomerizes the ribose moiety from AdoMet to the 7-aminomethyl group of 7-deazaguanine (preQ1-tRNA) to give epoxyqueuosine (oQ-tRNA). The chain is S-adenosylmethionine:tRNA ribosyltransferase-isomerase from Brevibacillus brevis (strain 47 / JCM 6285 / NBRC 100599).